Reading from the N-terminus, the 480-residue chain is Sialyltransferase-like protein 5 (480 aa).

Over 1–17 (MARAPPPLSSLPPPPRR) the chain is Cytoplasmic. A signal-anchor for type II membrane protein membrane pass occupies residues 18–38 (PTVVLLLGLALAFCLAVLSIQ). Over 39 to 480 (SSFFTAPRLA…VCVRHERSSS (442 aa)) the chain is Lumenal. 4 N-linked (GlcNAc...) asparagine glycosylation sites follow: asparagine 98, asparagine 130, asparagine 165, and asparagine 321.

Belongs to the glycosyltransferase 29 family.

It localises to the golgi apparatus membrane. In terms of biological role, may possess sialyltransferase-like activity in vitro. The protein is Sialyltransferase-like protein 5 of Oryza sativa subsp. japonica (Rice).